Reading from the N-terminus, the 885-residue chain is Cytosolic carboxypeptidase-like protein 5 (885 aa).

Positions 157 to 570 constitute a Peptidase M14 domain; it reads YPFSYSDCQD…AMAIAALDMA (414 aa). Zn(2+)-binding residues include His252 and Glu255. The segment at 343–402 is disordered; sequence NSQSPSEHQHSSHLPPDAPLSDPEKADSLQNRAHLGRSSSGDKPEAWTQTEVAEQKPNSV. Positions 388-402 are enriched in polar residues; the sequence is AWTQTEVAEQKPNSV. Zn(2+) is bound at residue His434. Glu516 acts as the Proton donor/acceptor in catalysis. 2 disordered regions span residues 605–733 and 783–839; these read TTVN…LASS and RLQA…PRPC. Over residues 620 to 640 the composition is skewed to polar residues; that stretch reads PPRSNNGLPVSCSENTLSRAR. 2 stretches are compositionally biased toward low complexity: residues 641–666 and 714–733; these read SFST…NSPS and PTSS…LASS. Phosphoserine is present on Ser840.

The protein belongs to the peptidase M14 family. Zn(2+) is required as a cofactor.

Its subcellular location is the cytoplasm. The protein localises to the cytosol. The protein resides in the nucleus. It is found in the cytoskeleton. It localises to the spindle. Its subcellular location is the midbody. It carries out the reaction gamma-L-glutamyl-L-glutamyl-[protein] + H2O = L-glutamyl-[protein] + L-glutamate. The catalysed reaction is (L-glutamyl)(n+1)-gamma-L-glutamyl-L-glutamyl-[protein] + H2O = (L-glutamyl)(n)-gamma-L-glutamyl-L-glutamyl-[protein] + L-glutamate. The enzyme catalyses C-terminal L-alpha-aminoacyl-L-glutamyl-[tubulin] + H2O = C-terminal L-alpha-aminoacyl-[tubulin] + L-glutamate. It catalyses the reaction C-terminal L-alpha-aminoacyl-L-glutamyl-L-glutamyl-[tubulin] + H2O = C-terminal L-alpha-aminoacyl-L-glutamyl-[tubulin] + L-glutamate. In terms of biological role, metallocarboxypeptidase that mediates deglutamylation of tubulin and non-tubulin target proteins. Catalyzes the removal of polyglutamate side chains present on the gamma-carboxyl group of glutamate residues within the C-terminal tail of alpha- and beta-tubulin. Cleaves alpha- and gamma-linked polyglutamate tubulin side-chain, as well as the branching point glutamate. Also catalyzes the removal of alpha-linked glutamate residues from the carboxy-terminus of alpha-tubulin. Mediates deglutamylation of nucleotidyltransferase CGAS, leading to CGAS antiviral defense response activation. The polypeptide is Cytosolic carboxypeptidase-like protein 5 (AGBL5) (Bos taurus (Bovine)).